The primary structure comprises 402 residues: Plasminogen activator inhibitor 1 (402 aa).

Positions 1-23 are cleaved as a signal peptide; that stretch reads MRMSPVFACLALGLALIFGEGSA. N-linked (GlcNAc...) asparagine glycosylation is found at Asn232, Asn288, and Asn352.

It belongs to the serpin family. As to quaternary structure, forms a heterodimer with TMPRSS7. Interacts with VTN. Binds LRP1B; binding is followed by internalization and degradation. Interacts with PPP1CB. In complex with PLAU/uPA, interacts with PLAUR/uPAR. Interacts with SORL1 and LRP1, either alone or in complex with PLAU; these interactions are abolished in the presence of LRPAP1/RAP. The ternary complex composed of PLAUR-PLAU-PAI1 also interacts with SORL1. Interacts with PLAT/tPA. Also interacts with SORL1, when complexed to PLAT/tPA. Vascular endothelial cells may be the primary site of synthesis of plasma PAI1.

It is found in the secreted. Serine protease inhibitor. Inhibits TMPRSS7. Is a primary inhibitor of tissue-type plasminogen activator (PLAT) and urokinase-type plasminogen activator (PLAU). As PLAT inhibitor, it is required for fibrinolysis down-regulation and is responsible for the controlled degradation of blood clots. As PLAU inhibitor, it is involved in the regulation of cell adhesion and spreading. Acts as a regulator of cell migration, independently of its role as protease inhibitor. It is required for stimulation of keratinocyte migration during cutaneous injury repair. It is involved in cellular and replicative senescence. Plays a role in alveolar type 2 cells senescence in the lung. Is involved in the regulation of cementogenic differentiation of periodontal ligament stem cells, and regulates odontoblast differentiation and dentin formation during odontogenesis. The sequence is that of Plasminogen activator inhibitor 1 (SERPINE1) from Bos taurus (Bovine).